Reading from the N-terminus, the 509-residue chain is Taxoid 14-beta-hydroxylase (509 aa).

3 helical membrane passes run 20 to 40 (AILF…LLFL), 186 to 206 (SVVA…FFNI), and 218 to 238 (LLEI…GFAY). C443 contacts heme.

It belongs to the cytochrome P450 family.

Its subcellular location is the microsome membrane. It carries out the reaction 10beta-hydroxytaxa-4(20),11-dien-5alpha-yl acetate + NADPH + O2 + H(+) = 10beta,14beta-dihydroxytaxa-4(20),11-dien-5alpha-yl acetate + NADP(+) + H2O. It functions in the pathway alkaloid biosynthesis; taxol biosynthesis. Functionally, catalyzes the conversion of 5-alpha-acetoxy-10beta-ol to 5-alpha-acetoxy-10beta,14beta-dihydroxy taxadiene. Also acts on taxa-4(20),11-dien-5-alpha-yl acetate. In Taxus cuspidata (Japanese yew), this protein is Taxoid 14-beta-hydroxylase.